The chain runs to 455 residues: MNHSEARGSGGHKGYRGRSQASEQWVPVAADDKSLEDSSGNRVRGSQGKGRSRTSWSPRNSYGRGNDEHSPVQAYVNKSNVGFVEKGVQQDRKSLEDGIGSTKQPDDGAAAGDNKAVLQSKSTNVSGGSFVSSECEDKDGAKMYCDLVNRVNDVTLSCQESVSSTVVQKVELSSVEDQKSAPKADGAGNSSNESSTRHFDIFLEKKGIVLKPNLLVLSREKKKAAKGYSGTVIRPGMVLLKNYLSINDQVMIVNKCRRLGLGEGGFYQPGYRDEAKLHLKMMCLGKNWDPETSRYGETRPFDGSTAPRIPAEFNQFVEKAVKESQSLAASNSKQTKGGDEIPFMLPDICIVNFYSSTGRLGLHQDKDESENSIRKGLPVVSFSIGDSAEFLYGDQRDEDKAETLTLESGDVLLFGGRSRKVFHGVRSIRKDTAPKALLQETSLRPGRLNLTFRQY.

2 disordered regions span residues 1 to 114 and 173 to 194; these read MNHS…AGDN and SSVE…SNES. In terms of domain architecture, Fe2OG dioxygenase spans 345–455; that stretch reads LPDICIVNFY…GRLNLTFRQY (111 aa). 352-354 is a binding site for 2-oxoglutarate; the sequence is NFY. Fe cation is bound by residues histidine 363, aspartate 365, and histidine 423. A 2-oxoglutarate-binding site is contributed by 447-453; the sequence is RLNLTFR.

This sequence belongs to the alkB family. The cofactor is Fe(2+). In terms of tissue distribution, expressed at low levels in roots and seedlings, but barely in cauline leaves, rosette leaves, stems, siliques and flowers.

It localises to the nucleus. The protein resides in the cytoplasm. It carries out the reaction an N(6)-methyl-2'-deoxyadenosine in DNA + 2-oxoglutarate + O2 = a 2'-deoxyadenosine in DNA + formaldehyde + succinate + CO2. Functionally, dioxygenase that catalyzes DNA N(6)-methyladenine (6 mA) demethylation with a low efficiency. In Arabidopsis thaliana (Mouse-ear cress), this protein is DNA N(6)-methyladenine demethylase ALKBH1C.